Reading from the N-terminus, the 189-residue chain is Elongation factor P (189 aa).

Lys-34 is modified (N6-(3,6-diaminohexanoyl)-5-hydroxylysine).

It belongs to the elongation factor P family. In terms of processing, may be beta-lysylated on the epsilon-amino group of Lys-34 by the combined action of EpmA and EpmB, and then hydroxylated on the C5 position of the same residue by EpmC (if this protein is present). Lysylation is critical for the stimulatory effect of EF-P on peptide-bond formation. The lysylation moiety may extend toward the peptidyltransferase center and stabilize the terminal 3-CCA end of the tRNA. Hydroxylation of the C5 position on Lys-34 may allow additional potential stabilizing hydrogen-bond interactions with the P-tRNA.

It is found in the cytoplasm. It functions in the pathway protein biosynthesis; polypeptide chain elongation. Functionally, involved in peptide bond synthesis. Alleviates ribosome stalling that occurs when 3 or more consecutive Pro residues or the sequence PPG is present in a protein, possibly by augmenting the peptidyl transferase activity of the ribosome. Modification of Lys-34 is required for alleviation. In Nitrosococcus oceani (strain ATCC 19707 / BCRC 17464 / JCM 30415 / NCIMB 11848 / C-107), this protein is Elongation factor P.